Here is a 132-residue protein sequence, read N- to C-terminus: uncharacterized protein (132 aa).

The signal sequence occupies residues 1–19 (MKKALFLVGLVFTAGVISS). Cys20 is lipidated: N-palmitoyl cysteine. Cys20 is lipidated: S-diacylglycerol cysteine.

It localises to the cell membrane. This is an uncharacterized protein from Aquifex aeolicus (strain VF5).